The chain runs to 306 residues: Esterase tropF (306 aa).

Active-site charge relay system residues include Ser-147, Asp-248, and His-276.

The protein belongs to the LovG family.

It participates in secondary metabolite biosynthesis. In terms of biological role, esterase; part of the gene cluster that mediates the biosynthesis of the tropolone class of fungal maleic anhydrides. The pathway begins with the synthesis of 3-methylorcinaldehyde by the non-reducing polyketide synthase (PKS) tropA. 3-methylorcinaldehyde is the substrate for the FAD-dependent monooxygenase tropB to yield a dearomatized hydroxycyclohexadione. The 2-oxoglutarate-dependent dioxygenase tropC then performs the oxidative ring expansion to provide the first tropolone metabolite stipitaldehyde. Trop D converts stipitaldehyde into stipitacetal which is in turn converted to stipitalide by the short-chain dehydrogenase/reductase tropE. The next steps involve tropF, tropG, tropH, tropI and tropJ to form successive tropolone maleic anhydrides including stipitaldehydic, stipitatonic and stipitatic acids. This chain is Esterase tropF, found in Talaromyces stipitatus (strain ATCC 10500 / CBS 375.48 / QM 6759 / NRRL 1006) (Penicillium stipitatum).